Reading from the N-terminus, the 389-residue chain is Galactose-1-phosphate uridylyltransferase (389 aa).

This sequence belongs to the galactose-1-phosphate uridylyltransferase type 2 family.

Its subcellular location is the cytoplasm. It catalyses the reaction alpha-D-galactose 1-phosphate + UDP-alpha-D-glucose = alpha-D-glucose 1-phosphate + UDP-alpha-D-galactose. It functions in the pathway carbohydrate metabolism; galactose metabolism. This is Galactose-1-phosphate uridylyltransferase (galT) from Butyrivibrio fibrisolvens.